Reading from the N-terminus, the 120-residue chain is Glycine cleavage system H protein (120 aa).

In terms of domain architecture, Lipoyl-binding spans 17–99; it reads VATVGITAHA…QGAGWLYRLK (83 aa). N6-lipoyllysine is present on Lys58.

The protein belongs to the GcvH family. The glycine cleavage system is composed of four proteins: P, T, L and H. (R)-lipoate serves as cofactor.

Its function is as follows. The glycine cleavage system catalyzes the degradation of glycine. The H protein shuttles the methylamine group of glycine from the P protein to the T protein. The protein is Glycine cleavage system H protein of Methylorubrum populi (strain ATCC BAA-705 / NCIMB 13946 / BJ001) (Methylobacterium populi).